The following is a 235-amino-acid chain: C-type lectin domain family 2 member D-related protein (235 aa).

The disordered stretch occupies residues 1 to 50; that stretch reads MPSSAHLQDPPPHLSRTLTQDEEQTSLRQSSSCGPSTTSASASESLSGST. The Cytoplasmic segment spans residues 1-75; it reads MPSSAHLQDP…KIIPTESAAK (75 aa). Low complexity predominate over residues 30–50; sequence SSSCGPSTTSASASESLSGST. Residues 76–96 traverse the membrane as a helical; Signal-anchor for type II membrane protein segment; sequence LLCCYAVFMALTVVVIALSIA. Topologically, residues 97 to 235 are extracellular; that stretch reads LSVKKTPQIS…KLNSYTSQCP (139 aa). Residues 121 to 232 form the C-type lectin domain; sequence FGNKCYYFNE…ICSKLNSYTS (112 aa). The N-linked (GlcNAc...) asparagine glycan is linked to asparagine 134.

The protein localises to the cell membrane. In terms of biological role, lectin-type cell surface receptor. The protein is C-type lectin domain family 2 member D-related protein of Rattus norvegicus (Rat).